The primary structure comprises 867 residues: MVNFTIDQIRHMMNMTHNIRNLSVVAHVDHGKSTLTDALVSKAGIISKKAAGDARFTDTRADEQERCITIKSTGISLYFEYDPETIDKQAAAPLNPTEEGDPTEEDIEIKQNSYLINLIDSPGHVDFSSEVTASLRVTDGALVVVDSVGGVCVQTETVLRQALAERIRPVLSCMCNKLDRVIAELQLDPEEAYHKLMKSVESVNVIIATYPDEAVGDIQVYPNQGTVAFGSGLQQWGFTRKFARLYAKKFGIDETKMMERLWGDYFFDAENKKWAKTDKKDERKAQGKKPLKRAFVQFVLDPVYGLYRALNEGRTEKYMKMLDTLGVTLTSEEKDLRDKALVKRVMSKWLPAADALLEMIVLHLPSPVDAQKYRAPLLYDGPEDDEACTAMKKCDPNGCLMMYVSKMVPTADQSRFYAFGRVFSGIIRSGQKVRILGPKYSATNKSDLLIKSVQRTVIMMGRYVEQVADIPCGNTCGLVGVDQYILKQATLTDCESAMTIKMMKFSVSPVVRVAVEPKNPGDLPRLVEGLKRLSKSDPMVVVITNTEAGEHIIAGAGELHLEICLKDLQDDFMKGTPIKISPPVVEFRESVNQATTEPGLAKSPNKHNRLYVNVEPMPDGLAQEIEDQKVTPEQEFKERARYMSTTYGMDVELMRKIWAFGPNGNGPNIFCEATHGVQYLNEIKESVVAGFGAACAAGPIVDEPCRNVLCKLMDVTLHADSIHRGMGQIMPPARRVVLGTMLKAEPILVEPVFLCEIQVPRAVSGGIYGVLTRRRGHVFEEIDEVGTPMMNIKSYLPVAESFGFTQDLRGATAGQAFPQCVFSHWQAYNGGDPLTEGTKTNEMVKSIRNRKGLAPEVPTPERYLDKL.

The 352-residue stretch at 17–368 (HNIRNLSVVA…MIVLHLPSPV (352 aa)) folds into the tr-type G domain. Residue 26–33 (AHVDHGKS) coordinates GTP. Phosphothreonine is present on residues threonine 57 and threonine 59. GTP contacts are provided by residues 176–179 (NKLD) and 231–233 (SGL). Histidine 723 is subject to Diphthamide.

The protein belongs to the TRAFAC class translation factor GTPase superfamily. Classic translation factor GTPase family. EF-G/EF-2 subfamily. Post-translationally, phosphorylation by EF-2 kinase completely inactivates EF-2.

Its subcellular location is the cytoplasm. The enzyme catalyses GTP + H2O = GDP + phosphate + H(+). Functionally, catalyzes the GTP-dependent ribosomal translocation step during translation elongation. During this step, the ribosome changes from the pre-translocational (PRE) to the post-translocational (POST) state as the newly formed A-site-bound peptidyl-tRNA and P-site-bound deacylated tRNA move to the P and E sites, respectively. Catalyzes the coordinated movement of the two tRNA molecules, the mRNA and conformational changes in the ribosome. This Blastocystis hominis protein is Elongation factor 2.